Here is a 74-residue protein sequence, read N- to C-terminus: ATP synthase subunit 9, mitochondrial (74 aa).

A run of 2 helical transmembrane segments spans residues 8–28 (IGAG…GLIF) and 50–70 (ILGF…AFLI).

Belongs to the ATPase C chain family. As to quaternary structure, F-type ATPases have 2 components, CF(1) - the catalytic core - and CF(0) - the membrane proton channel. CF(1) has five subunits: alpha(3), beta(3), gamma(1), delta(1), epsilon(1). CF(0) has three main subunits: a, b and c.

It localises to the mitochondrion membrane. In terms of biological role, mitochondrial membrane ATP synthase (F(1)F(0) ATP synthase or Complex V) produces ATP from ADP in the presence of a proton gradient across the membrane which is generated by electron transport complexes of the respiratory chain. F-type ATPases consist of two structural domains, F(1) - containing the extramembraneous catalytic core and F(0) - containing the membrane proton channel, linked together by a central stalk and a peripheral stalk. During catalysis, ATP synthesis in the catalytic domain of F(1) is coupled via a rotary mechanism of the central stalk subunits to proton translocation. Part of the complex F(0) domain. A homomeric c-ring of probably 10 subunits is part of the complex rotary element. The polypeptide is ATP synthase subunit 9, mitochondrial (atp9) (Schizosaccharomyces pombe (strain 972 / ATCC 24843) (Fission yeast)).